The following is an 84-amino-acid chain: Phosphoribosylformylglycinamidine synthase subunit PurS (84 aa).

Belongs to the PurS family. As to quaternary structure, homodimer or homotetramer. Part of the FGAM synthase complex composed of 1 PurL, 1 PurQ and 2 PurS subunits.

The protein resides in the cytoplasm. It catalyses the reaction N(2)-formyl-N(1)-(5-phospho-beta-D-ribosyl)glycinamide + L-glutamine + ATP + H2O = 2-formamido-N(1)-(5-O-phospho-beta-D-ribosyl)acetamidine + L-glutamate + ADP + phosphate + H(+). Its pathway is purine metabolism; IMP biosynthesis via de novo pathway; 5-amino-1-(5-phospho-D-ribosyl)imidazole from N(2)-formyl-N(1)-(5-phospho-D-ribosyl)glycinamide: step 1/2. Its function is as follows. Part of the phosphoribosylformylglycinamidine synthase complex involved in the purines biosynthetic pathway. Catalyzes the ATP-dependent conversion of formylglycinamide ribonucleotide (FGAR) and glutamine to yield formylglycinamidine ribonucleotide (FGAM) and glutamate. The FGAM synthase complex is composed of three subunits. PurQ produces an ammonia molecule by converting glutamine to glutamate. PurL transfers the ammonia molecule to FGAR to form FGAM in an ATP-dependent manner. PurS interacts with PurQ and PurL and is thought to assist in the transfer of the ammonia molecule from PurQ to PurL. The polypeptide is Phosphoribosylformylglycinamidine synthase subunit PurS (Bacillus subtilis (strain 168)).